A 181-amino-acid polypeptide reads, in one-letter code: MTGIKKPMSQYQDDNELEDWGPSKTQLKRDAEVLQKLGAEIVSLSHSELEKIPLDEELADAVELGRKLKPKKDESFRRHLQFIGRLMRSRDIEPIEEALSIIKNRHSTVNARLHRLEQWRERLITEGDSALNELMSQFHELDRQKLRQLIRSANKERELNKPPVAYREMYQYLRGEIEDLL.

Residues methionine 1–serine 23 are disordered.

The protein belongs to the DarP family.

The protein resides in the cytoplasm. Its function is as follows. Member of a network of 50S ribosomal subunit biogenesis factors which assembles along the 30S-50S interface, preventing incorrect 23S rRNA structures from forming. Promotes peptidyl transferase center (PTC) maturation. The chain is Dual-action ribosomal maturation protein DarP from Aeromonas salmonicida (strain A449).